We begin with the raw amino-acid sequence, 174 residues long: Early nodulin-11 (174 aa).

The N-terminal stretch at 1 to 25 (MASFFLYSLGLVFLSALTLVPLGLA) is a signal peptide. The interval 28 to 174 (SPSHNMPPNP…GNQPPPSIHF (147 aa)) is disordered. A compositionally biased stretch (pro residues) spans 53–65 (YNPPIYKPPPTYK). Residues 70-83 (KQPINKSPNKKPLL) are compositionally biased toward low complexity. Basic residues predominate over residues 122-132 (PQKKPPSRKRP). Pro residues-rich tracts occupy residues 134–150 (NTPP…PVNK) and 159–174 (KRPP…SIHF).

It belongs to the plant proline-rich protein superfamily. In terms of tissue distribution, expressed in cotyledons, leaf vasculature, stomatal guard cells and trichomes. In the embryo, expressed in embryo suspensors, the epidermis and underlying tissues of the cotyledons, hypocotyls, and radicle in maturing embryos, and the outer cell layer of the endosperm.

The protein localises to the secreted. The protein resides in the cell wall. Its function is as follows. Involved in the infection process during the plant-rhizobium interaction. Involved in actinorhizal root nodulation. Involved in symbiotic association with the nitrogen-fixing actinomycete Frankia spp. The polypeptide is Early nodulin-11 (Medicago truncatula (Barrel medic)).